The primary structure comprises 120 residues: uncharacterized protein (120 aa).

2 helical membrane-spanning segments follow: residues 8-28 (PFVTGVLLPSAVFSFLFCTLV) and 55-75 (FLENTLIFLGSGNLTAHIGIL).

Its subcellular location is the membrane. This is an uncharacterized protein from Saccharomyces cerevisiae (strain ATCC 204508 / S288c) (Baker's yeast).